We begin with the raw amino-acid sequence, 225 residues long: Uracil-DNA glycosylase (225 aa).

Residue D65 is the Proton acceptor of the active site.

This sequence belongs to the uracil-DNA glycosylase (UDG) superfamily. UNG family.

The protein resides in the cytoplasm. It catalyses the reaction Hydrolyzes single-stranded DNA or mismatched double-stranded DNA and polynucleotides, releasing free uracil.. In terms of biological role, excises uracil residues from the DNA which can arise as a result of misincorporation of dUMP residues by DNA polymerase or due to deamination of cytosine. The polypeptide is Uracil-DNA glycosylase (Bacillus cereus (strain G9842)).